Here is a 631-residue protein sequence, read N- to C-terminus: Integrator complex subunit 10 (631 aa).

Positions 545 to 570 (FELTSSPNSSGTPTATTVAGGSQSRR) are enriched in polar residues. The interval 545–577 (FELTSSPNSSGTPTATTVAGGSQSRRIGTRGAD) is disordered.

Belongs to the Integrator subunit 10 family. In terms of assembly, belongs to the multiprotein complex Integrator, at least composed of IntS1, IntS2, IntS3, IntS4, omd/IntS5, IntS6, defl/IntS7, IntS8, IntS9, IntS10, IntS11, IntS12, asun/IntS13, IntS14 and IntS15. The core complex associates with protein phosphatase 2A subunits mts/PP2A and Pp2A-29B, to form the Integrator-PP2A (INTAC) complex.

Its subcellular location is the nucleus. In terms of biological role, component of the integrator complex, a multiprotein complex that terminates RNA polymerase II (Pol II) transcription in the promoter-proximal region of genes. The integrator complex provides a quality checkpoint during transcription elongation by driving premature transcription termination of transcripts that are unfavorably configured for transcriptional elongation: the complex terminates transcription by (1) catalyzing dephosphorylation of the C-terminal domain (CTD) of Pol II subunit Polr2A/Rbp1 and Spt5, and (2) degrading the exiting nascent RNA transcript via endonuclease activity. The integrator complex is also involved in the 3'-end processing of the U7 snRNA, and also the spliceosomal snRNAs U1, U2, U4 and U5. The polypeptide is Integrator complex subunit 10 (Drosophila melanogaster (Fruit fly)).